A 366-amino-acid polypeptide reads, in one-letter code: Chorismate synthase (366 aa).

Arginine 48 and arginine 54 together coordinate NADP(+). Residues 125–127 (RSS), 238–239 (NA), glycine 278, 293–297 (KPTSS), and arginine 319 contribute to the FMN site.

This sequence belongs to the chorismate synthase family. In terms of assembly, homotetramer. It depends on FMNH2 as a cofactor.

The enzyme catalyses 5-O-(1-carboxyvinyl)-3-phosphoshikimate = chorismate + phosphate. The protein operates within metabolic intermediate biosynthesis; chorismate biosynthesis; chorismate from D-erythrose 4-phosphate and phosphoenolpyruvate: step 7/7. Its function is as follows. Catalyzes the anti-1,4-elimination of the C-3 phosphate and the C-6 proR hydrogen from 5-enolpyruvylshikimate-3-phosphate (EPSP) to yield chorismate, which is the branch point compound that serves as the starting substrate for the three terminal pathways of aromatic amino acid biosynthesis. This reaction introduces a second double bond into the aromatic ring system. The protein is Chorismate synthase of Herminiimonas arsenicoxydans.